The chain runs to 166 residues: NAD(P)H-quinone oxidoreductase subunit I, chloroplastic (166 aa).

4Fe-4S ferredoxin-type domains are found at residues Gly55–Lys84 and Leu95–Glu124. [4Fe-4S] cluster is bound by residues Cys64, Cys67, Cys70, Cys74, Cys104, Cys107, Cys110, and Cys114.

Belongs to the complex I 23 kDa subunit family. As to quaternary structure, NDH is composed of at least 16 different subunits, 5 of which are encoded in the nucleus. [4Fe-4S] cluster is required as a cofactor.

It localises to the plastid. The protein resides in the chloroplast thylakoid membrane. The enzyme catalyses a plastoquinone + NADH + (n+1) H(+)(in) = a plastoquinol + NAD(+) + n H(+)(out). It catalyses the reaction a plastoquinone + NADPH + (n+1) H(+)(in) = a plastoquinol + NADP(+) + n H(+)(out). Its function is as follows. NDH shuttles electrons from NAD(P)H:plastoquinone, via FMN and iron-sulfur (Fe-S) centers, to quinones in the photosynthetic chain and possibly in a chloroplast respiratory chain. The immediate electron acceptor for the enzyme in this species is believed to be plastoquinone. Couples the redox reaction to proton translocation, and thus conserves the redox energy in a proton gradient. The sequence is that of NAD(P)H-quinone oxidoreductase subunit I, chloroplastic from Acanthospermum australe (Paraguayan starburr).